We begin with the raw amino-acid sequence, 1091 residues long: MSGNSFAYSEQAGGGEATELGQEATSTVSPSGAFGLFSSDLKKNEDLKQMLESNKDSAKLDAMKRIVGMIAKGKNASELFPAVVKNVASKNIEIKKLVYVYLVRYAEEQQDLALLSISTFQRALKDPNQLIRASALRVLSSIRVPIIVPIMMLAIKEASADLSPYVRKNAAHAIQKLYSLDPEQKEMLIEVIEKLLKDKSTLVAGSVVMAFEEVCPDRIDLIHKNYRKLCNLLVDVEEWGQVVIIHMLTRYARTQFVSPWKEDDGLEDNEKNFYESDDEQKEKTDQKKKPYAMDPDHRLLIRNTKPLLQSRNAAVVMAVAQLYWHISPKSEVGIISKSLVRLLRSNREVQYIVLQNIATMSIQRKGMLEPYLKSFYVRSTDPTMIKILKLEILTNLANEANISTLLREFQTYVKSQDKQFAAATIQTIGRCATSISEVTDTCLSGLVCLLSNRDEIVVAESVVVIKKLLQMQPAQHGEIIKHMAKLLDSITVPVARASILWLIGENCERVPKIAPDVLRKMAKSFTNEDDLVKLQILNLGAKLYLTNSKQTKLLTQYILNLGKYDQNYDIRDRTRFIRQLIVPNEKSGALSKYAKKIFLAQKPAPLLESPFKDRDHFQLGTLSHTLNTKAIGYLELSNWPEVAPDPSVRNVEVIELQAKEWTPAGKAKKENPARKFYSDSEEEEDSSDSSSDSESESGSASGEQDEEGDSSEDSSEDSSSEHRSDSESVSEVGDKRTAKRNSKSKGKSDSEDEEKENEKSKTSDSSSTDSSSVEESSSDSESESESESESESKKVTMEKEKKTKEDRNLTKDVSLLDLDDFNPVSTPVVLPTPALSPSLIADLEGLNLSTSSSVISVNTPVFVPVKTHVLLHRMSGRGLAAHYFFPRQPCIFGDKMVSIQITLNNTTDRKIENIHIEGKKLPMGMQMHVFNPIESLEPEGSITVSMGIDFCDSTQTASFQLCTKDDCFNVNIQPPVGELLLPVAMSEKDFKKEQGMLTGMNETSTVIIAAPQNFTPSVILQKVVNIANVGVVPSGQDNIYRFAAKTVHSGSLMLVTVELKEGSTAQLIINTERTVIGSVLLRELKPVLSQG.

2 disordered regions span residues 1–32 and 267–290; these read MSGNSFAYSEQAGGGEATELGQEATSTVSPSG and EDNEKNFYESDDEQKEKTDQKKKP. Residues 267–288 are compositionally biased toward basic and acidic residues; the sequence is EDNEKNFYESDDEQKEKTDQKK. 2 positions are modified to phosphoserine: S276 and S609. The segment at 664–807 is disordered; that stretch reads AGKAKKENPA…EKEKKTKEDR (144 aa). Positions 667–678 are enriched in basic and acidic residues; sequence AKKENPARKFYS. Acidic residues-rich tracts occupy residues 679-695 and 703-718; these read DSEEEEDSSDSSSDSES and EQDEEGDSSEDSSEDS. Over residues 719-736 the composition is skewed to basic and acidic residues; sequence SSEHRSDSESVSEVGDKR. A phosphoserine mark is found at S748 and S750. The segment covering 763–775 has biased composition (low complexity); sequence SDSSSTDSSSVEE. A compositionally biased stretch (acidic residues) spans 776–789; that stretch reads SSSDSESESESESE. A compositionally biased stretch (basic and acidic residues) spans 790 to 807; it reads SESKKVTMEKEKKTKEDR.

It belongs to the adaptor complexes large subunit family. In terms of assembly, adaptor protein complex 3 (AP-3) is a heterotetramer composed of two large adaptins (delta-type subunit AP3D1 and beta-type subunit AP3B1 or AP3B2), a medium adaptin (mu-type subunit AP3M1 or AP3M2) and a small adaptin (sigma-type subunit APS1 or AP3S2). AP-3 associates with the BLOC-1 complex. Interacts with KIF3A; interaction is direct; interaction is impaired by pyrophosphorylation of AP3B1. In terms of processing, phosphorylated on serine residues. Post-translationally, pyrophosphorylation by 5-diphosphoinositol pentakisphosphate (5-IP7) impairs interaction with KIF3A. Serine pyrophosphorylation is achieved by Mg(2+)-dependent, but enzyme independent transfer of a beta-phosphate from a inositol pyrophosphate to a pre-phosphorylated serine residue.

It is found in the cytoplasmic vesicle. Its subcellular location is the clathrin-coated vesicle membrane. It localises to the golgi apparatus. Subunit of non-clathrin- and clathrin-associated adaptor protein complex 3 (AP-3) that plays a role in protein sorting in the late-Golgi/trans-Golgi network (TGN) and/or endosomes. The AP complexes mediate both the recruitment of clathrin to membranes and the recognition of sorting signals within the cytosolic tails of transmembrane cargo molecules. AP-3 appears to be involved in the sorting of a subset of transmembrane proteins targeted to lysosomes and lysosome-related organelles. In concert with the BLOC-1 complex, AP-3 is required to target cargos into vesicles assembled at cell bodies for delivery into neurites and nerve terminals. The sequence is that of AP-3 complex subunit beta-1 (AP3B1) from Canis lupus familiaris (Dog).